The following is a 231-amino-acid chain: LexA repressor (231 aa).

A disordered region spans residues Met1–Glu24. A DNA-binding region (H-T-H motif) is located at residues Val43–Gln62. Active-site for autocatalytic cleavage activity residues include Ser146 and Lys183.

This sequence belongs to the peptidase S24 family. Homodimer.

It catalyses the reaction Hydrolysis of Ala-|-Gly bond in repressor LexA.. Represses a number of genes involved in the response to DNA damage (SOS response), including recA and lexA. In the presence of single-stranded DNA, RecA interacts with LexA causing an autocatalytic cleavage which disrupts the DNA-binding part of LexA, leading to derepression of the SOS regulon and eventually DNA repair. The polypeptide is LexA repressor (Magnetococcus marinus (strain ATCC BAA-1437 / JCM 17883 / MC-1)).